A 110-amino-acid chain; its full sequence is MGQNDLVKTLRMNYLFDFYQSLLTNKQKNYLELFYLQDYSLSEIADTFEVSRQAVYDNIRRTGDLVEDYESKLRLYQRFEKRRELYNLMKQSLNQPELLKQYITQLEELE.

The protein belongs to the UPF0122 family.

In terms of biological role, might take part in the signal recognition particle (SRP) pathway. This is inferred from the conservation of its genetic proximity to ftsY/ffh. May be a regulatory protein. The sequence is that of UPF0122 protein SERP0802 from Staphylococcus epidermidis (strain ATCC 35984 / DSM 28319 / BCRC 17069 / CCUG 31568 / BM 3577 / RP62A).